The sequence spans 398 residues: Digeranylgeranylglycerophospholipid reductase (398 aa).

The FAD site is built by A15, E34, C45, A46, G48, R99, A123, D280, G292, and I293. Position 372 (V372) interacts with a 2,3-bis-O-(geranylgeranyl)-sn-glycerol 1-phospholipid.

It belongs to the geranylgeranyl reductase family. DGGGPL reductase subfamily. The cofactor is FAD.

The catalysed reaction is a 2,3-bis-O-phytanyl-sn-glycerol 1-phospholipid + 8 oxidized 2[4Fe-4S]-[ferredoxin] = a 2,3-bis-O-(geranylgeranyl)-sn-glycerol 1-phospholipid + 8 reduced 2[4Fe-4S]-[ferredoxin] + 16 H(+). It carries out the reaction 2,3-bis-O-(phytanyl)-sn-glycerol 1-phosphate + 8 oxidized 2[4Fe-4S]-[ferredoxin] = 2,3-bis-O-(geranylgeranyl)-sn-glycerol 1-phosphate + 8 reduced 2[4Fe-4S]-[ferredoxin] + 16 H(+). It catalyses the reaction a 2,3-bis-O-phytanyl-sn-glycerol 1-phospholipid + 8 A = a 2,3-bis-O-(geranylgeranyl)-sn-glycerol 1-phospholipid + 8 AH2. The enzyme catalyses CDP-2,3-bis-O-(geranylgeranyl)-sn-glycerol + 8 AH2 = CDP-2,3-bis-O-(phytanyl)-sn-glycerol + 8 A. The catalysed reaction is archaetidylserine + 8 AH2 = 2,3-bis-O-phytanyl-sn-glycero-3-phospho-L-serine + 8 A. It participates in membrane lipid metabolism; glycerophospholipid metabolism. Functionally, is involved in the reduction of 2,3-digeranylgeranylglycerophospholipids (unsaturated archaeols) into 2,3-diphytanylglycerophospholipids (saturated archaeols) in the biosynthesis of archaeal membrane lipids. Catalyzes the formation of archaetidic acid (2,3-di-O-phytanyl-sn-glyceryl phosphate) from 2,3-di-O-geranylgeranylglyceryl phosphate (DGGGP) via the hydrogenation of each double bond of the isoprenoid chains. Is also probably able to reduce double bonds of geranyl groups in CDP-2,3-bis-O-(geranylgeranyl)-sn-glycerol and archaetidylserine, thus acting at various stages in the biosynthesis of archaeal membrane lipids. The polypeptide is Digeranylgeranylglycerophospholipid reductase (Methanoculleus marisnigri (strain ATCC 35101 / DSM 1498 / JR1)).